A 557-amino-acid chain; its full sequence is MPQRIELTSEPVRKPRSTESSLLRKIQRACRSTLPEPDLGLNLDVADYINSKQGATPREAVLAIEKLVNNGDTQAAVFALSLLDVLVKNCGYSIHLQISRKEFLNDLVKRFPEQPPLRYSKVQQMILEAIEEWYQTICKHASYKDDLQYINDMHKLLKYKGYTFPKVGSENLAVLRPNDQLRTPSELQEEQERAQAAKLEELLRSGKPDDLKEANKLMKIMAGFKDDTKVAVKQAINNELNKLKRKADLFNEMLTSADEPDLENEAIQELYGDLKSAQPKFKKLIEEERDDDALVSNLSKFNDLVIQLLKRYKSIKGMKEEELNVPDTNEPAKELNLIDFDDDTTANTPSVTSPSKSLQPFDDLLGDFNKVSLSSPKSPQENDTVVDILGDAHSKSSGIDLLDFDSQPGESKTALSAYSNSIVLPNGLLNSSSNSKEITAQSQRHILNQSDHLRIDYELTRESMTKLRLVIFYSNISSDPITNFALLVASPKGTTLSLQPQSGNMLQSNSRDGIKQIASVEGISVNLGKPIKLKWKANYCTKGDSKEESGTTSLPTI.

The VHS domain occupies 29–165; the sequence is ACRSTLPEPD…LLKYKGYTFP (137 aa). Positions 192–317 constitute a GAT domain; it reads ERAQAAKLEE…LLKRYKSIKG (126 aa). Phosphothreonine is present on threonine 348. 4 positions are modified to phosphoserine: serine 353, serine 357, serine 378, and serine 394. Positions 440–556 constitute a GAE domain; the sequence is AQSQRHILNQ…EESGTTSLPT (117 aa).

As to quaternary structure, binds to ARF1 and ARF2.

It is found in the golgi apparatus. Its subcellular location is the trans-Golgi network. May play a role in the regulation of membrane traffic through the trans-Golgi network. This Saccharomyces cerevisiae (strain ATCC 204508 / S288c) (Baker's yeast) protein is ADP-ribosylation factor-binding protein GGA1 (GGA1).